Here is a 316-residue protein sequence, read N- to C-terminus: Thioredoxin reductase (316 aa).

36–43 contacts FAD; sequence ERGIPGGQ. Cysteines 135 and 138 form a disulfide. FAD is bound at residue 278 to 287; the sequence is DIREKSLRQI.

This sequence belongs to the class-II pyridine nucleotide-disulfide oxidoreductase family. As to quaternary structure, homodimer. It depends on FAD as a cofactor.

Its subcellular location is the cytoplasm. The enzyme catalyses [thioredoxin]-dithiol + NADP(+) = [thioredoxin]-disulfide + NADPH + H(+). In Bacillus subtilis (strain 168), this protein is Thioredoxin reductase (trxB).